The primary structure comprises 501 residues: ATP synthase subunit alpha (501 aa).

ATP is bound at residue 169-176 (GDRQTGKT).

This sequence belongs to the ATPase alpha/beta chains family. F-type ATPases have 2 components, CF(1) - the catalytic core - and CF(0) - the membrane proton channel. CF(1) has five subunits: alpha(3), beta(3), gamma(1), delta(1), epsilon(1). CF(0) has three main subunits: a(1), b(2) and c(9-12). The alpha and beta chains form an alternating ring which encloses part of the gamma chain. CF(1) is attached to CF(0) by a central stalk formed by the gamma and epsilon chains, while a peripheral stalk is formed by the delta and b chains.

It is found in the cell inner membrane. It catalyses the reaction ATP + H2O + 4 H(+)(in) = ADP + phosphate + 5 H(+)(out). In terms of biological role, produces ATP from ADP in the presence of a proton gradient across the membrane. The alpha chain is a regulatory subunit. This chain is ATP synthase subunit alpha, found in Campylobacter jejuni subsp. jejuni serotype O:6 (strain 81116 / NCTC 11828).